A 219-amino-acid polypeptide reads, in one-letter code: 7-cyano-7-deazaguanine synthase (219 aa).

Residue phenylalanine 10 to leucine 20 coordinates ATP. 4 residues coordinate Zn(2+): cysteine 188, cysteine 196, cysteine 199, and cysteine 202.

The protein belongs to the QueC family. Zn(2+) serves as cofactor.

It carries out the reaction 7-carboxy-7-deazaguanine + NH4(+) + ATP = 7-cyano-7-deazaguanine + ADP + phosphate + H2O + H(+). The protein operates within purine metabolism; 7-cyano-7-deazaguanine biosynthesis. Functionally, catalyzes the ATP-dependent conversion of 7-carboxy-7-deazaguanine (CDG) to 7-cyano-7-deazaguanine (preQ(0)). The chain is 7-cyano-7-deazaguanine synthase from Neisseria meningitidis serogroup C / serotype 2a (strain ATCC 700532 / DSM 15464 / FAM18).